The chain runs to 968 residues: Probable transport protein MmpL2 (968 aa).

11 helical membrane-spanning segments follow: residues Phe-22–Pro-42, Val-204–Ile-224, Ile-245–Thr-265, Ala-297–Ala-317, Pro-328–Leu-348, Trp-378–Pro-398, Tyr-763–Ile-783, Val-787–Leu-807, Ile-815–Val-835, Thr-866–Phe-886, and Arg-890–Val-910.

It belongs to the resistance-nodulation-cell division (RND) (TC 2.A.6) family. MmpL subfamily.

Its subcellular location is the cell membrane. This Mycobacterium tuberculosis (strain CDC 1551 / Oshkosh) protein is Probable transport protein MmpL2 (mmpL2).